A 366-amino-acid chain; its full sequence is Peptide chain release factor 2 (366 aa).

Gln246 is modified (N5-methylglutamine).

The protein belongs to the prokaryotic/mitochondrial release factor family. Methylated by PrmC. Methylation increases the termination efficiency of RF2.

It localises to the cytoplasm. Functionally, peptide chain release factor 2 directs the termination of translation in response to the peptide chain termination codons UGA and UAA. In Frankia casuarinae (strain DSM 45818 / CECT 9043 / HFP020203 / CcI3), this protein is Peptide chain release factor 2.